The chain runs to 327 residues: MLGFITRPPHRFLSLLCPGLRIPQLSVLCAQPRPRAMAISSSSCELPLVAVCQVTSTPDKQQNFKTCAELVREAARLGACLAFLPEAFDFIARDPAETLHLSEPLGGKLLEEYTQLARECGLWLSLGGFHERGQDWEQTQKIYNCHVLLNSKGAVVATYRKTHLCDVEIPGQGPMCESNSTMPGPSLESPVSTPAGKIGLAVCYDMRFPELSLALAQAGAEILTYPSAFGSITGPAHWEVLLRARAIETQCYVVAAAQCGRHHEKRASYGHSMVVDPWGTVVARCSEGPGLCLARIDLNYLRQLRRHLPVFQHRRPDLYGNLGHPLS.

The transit peptide at 1 to 13 directs the protein to the mitochondrion; the sequence is MLGFITRPPHRFL. A CN hydrolase domain is found at 46 to 298; the sequence is LPLVAVCQVT…PGLCLARIDL (253 aa). The Proton acceptor role is filled by Glu86. Lys161 (proton donor) is an active-site residue. The Nucleophile role is filled by Cys203.

The protein belongs to the carbon-nitrogen hydrolase superfamily. NIT1/NIT2 family. Detected in heart, brain, placenta, liver, skeletal muscle, kidney and pancreas.

The protein resides in the mitochondrion. It is found in the cytoplasm. It catalyses the reaction N-(4-oxoglutaryl)-L-cysteinylglycine + H2O = L-cysteinylglycine + 2-oxoglutarate. Catalyzes the hydrolysis of the amide bond in N-(4-oxoglutarate)-L-cysteinylglycine (deaminated glutathione), a metabolite repair reaction to dispose of the harmful deaminated glutathione. Plays a role in cell growth and apoptosis: loss of expression promotes cell growth, resistance to DNA damage stress and increased incidence to NMBA-induced tumors. Has tumor suppressor properties that enhances the apoptotic responsiveness in cancer cells; this effect is additive to the tumor suppressor activity of FHIT. It is also a negative regulator of primary T-cells. This Homo sapiens (Human) protein is Deaminated glutathione amidase (NIT1).